Here is a 613-residue protein sequence, read N- to C-terminus: Dihydroxy-acid dehydratase (613 aa).

D81 lines the Mg(2+) pocket. Residue C122 participates in [2Fe-2S] cluster binding. Mg(2+) contacts are provided by D123 and K124. Residue K124 is modified to N6-carboxylysine. Residue C195 coordinates [2Fe-2S] cluster. E491 serves as a coordination point for Mg(2+). S517 (proton acceptor) is an active-site residue.

The protein belongs to the IlvD/Edd family. In terms of assembly, homodimer. It depends on [2Fe-2S] cluster as a cofactor. Mg(2+) is required as a cofactor.

The catalysed reaction is (2R)-2,3-dihydroxy-3-methylbutanoate = 3-methyl-2-oxobutanoate + H2O. It carries out the reaction (2R,3R)-2,3-dihydroxy-3-methylpentanoate = (S)-3-methyl-2-oxopentanoate + H2O. It participates in amino-acid biosynthesis; L-isoleucine biosynthesis; L-isoleucine from 2-oxobutanoate: step 3/4. Its pathway is amino-acid biosynthesis; L-valine biosynthesis; L-valine from pyruvate: step 3/4. In terms of biological role, functions in the biosynthesis of branched-chain amino acids. Catalyzes the dehydration of (2R,3R)-2,3-dihydroxy-3-methylpentanoate (2,3-dihydroxy-3-methylvalerate) into 2-oxo-3-methylpentanoate (2-oxo-3-methylvalerate) and of (2R)-2,3-dihydroxy-3-methylbutanoate (2,3-dihydroxyisovalerate) into 2-oxo-3-methylbutanoate (2-oxoisovalerate), the penultimate precursor to L-isoleucine and L-valine, respectively. The protein is Dihydroxy-acid dehydratase of Buchnera aphidicola subsp. Schlechtendalia chinensis.